Here is a 279-residue protein sequence, read N- to C-terminus: Pantothenate synthetase (279 aa).

26 to 33 lines the ATP pocket; that stretch reads MGALHSGH. Catalysis depends on His-33, which acts as the Proton donor. Gln-57 lines the (R)-pantoate pocket. Gln-57 serves as a coordination point for beta-alanine. Residue 147-150 participates in ATP binding; that stretch reads GQKD. Gln-153 provides a ligand contact to (R)-pantoate. Residues Ile-176 and 184-187 contribute to the ATP site; that span reads ESSR.

This sequence belongs to the pantothenate synthetase family. Homodimer.

The protein resides in the cytoplasm. It catalyses the reaction (R)-pantoate + beta-alanine + ATP = (R)-pantothenate + AMP + diphosphate + H(+). Its pathway is cofactor biosynthesis; (R)-pantothenate biosynthesis; (R)-pantothenate from (R)-pantoate and beta-alanine: step 1/1. Functionally, catalyzes the condensation of pantoate with beta-alanine in an ATP-dependent reaction via a pantoyl-adenylate intermediate. In Corynebacterium glutamicum (strain R), this protein is Pantothenate synthetase.